Here is a 337-residue protein sequence, read N- to C-terminus: Eukaryotic translation initiation factor 3 subunit I (337 aa).

5 WD repeats span residues 8 to 47 (GHER…RLGT), 50 to 91 (GHQG…KVWD), 147 to 186 (CTES…QLEN), 191 to 230 (EFDH…ILKT), and 288 to 327 (GHFG…FDFM).

This sequence belongs to the eIF-3 subunit I family. In terms of assembly, component of the eukaryotic translation initiation factor 3 (eIF-3) complex.

The protein resides in the cytoplasm. Its function is as follows. Component of the eukaryotic translation initiation factor 3 (eIF-3) complex, which is involved in protein synthesis of a specialized repertoire of mRNAs and, together with other initiation factors, stimulates binding of mRNA and methionyl-tRNAi to the 40S ribosome. The eIF-3 complex specifically targets and initiates translation of a subset of mRNAs involved in cell proliferation. The protein is Eukaryotic translation initiation factor 3 subunit I (tif34) of Aspergillus niger (strain ATCC MYA-4892 / CBS 513.88 / FGSC A1513).